The primary structure comprises 329 residues: Phosphate acyltransferase (329 aa).

The protein belongs to the PlsX family. As to quaternary structure, homodimer. Probably interacts with PlsY.

It localises to the cytoplasm. The catalysed reaction is a fatty acyl-[ACP] + phosphate = an acyl phosphate + holo-[ACP]. The protein operates within lipid metabolism; phospholipid metabolism. Functionally, catalyzes the reversible formation of acyl-phosphate (acyl-PO(4)) from acyl-[acyl-carrier-protein] (acyl-ACP). This enzyme utilizes acyl-ACP as fatty acyl donor, but not acyl-CoA. The chain is Phosphate acyltransferase from Shouchella clausii (strain KSM-K16) (Alkalihalobacillus clausii).